Reading from the N-terminus, the 160-residue chain is SsrA-binding protein (160 aa).

The tract at residues 131–160 (KKEFDKRHTEKERDSDREIQRAMRTKGKDD) is disordered.

It belongs to the SmpB family.

Its subcellular location is the cytoplasm. Required for rescue of stalled ribosomes mediated by trans-translation. Binds to transfer-messenger RNA (tmRNA), required for stable association of tmRNA with ribosomes. tmRNA and SmpB together mimic tRNA shape, replacing the anticodon stem-loop with SmpB. tmRNA is encoded by the ssrA gene; the 2 termini fold to resemble tRNA(Ala) and it encodes a 'tag peptide', a short internal open reading frame. During trans-translation Ala-aminoacylated tmRNA acts like a tRNA, entering the A-site of stalled ribosomes, displacing the stalled mRNA. The ribosome then switches to translate the ORF on the tmRNA; the nascent peptide is terminated with the 'tag peptide' encoded by the tmRNA and targeted for degradation. The ribosome is freed to recommence translation, which seems to be the essential function of trans-translation. This is SsrA-binding protein from Stutzerimonas stutzeri (strain A1501) (Pseudomonas stutzeri).